We begin with the raw amino-acid sequence, 197 residues long: UPF0637 protein LEUM_0496 (197 aa).

It belongs to the UPF0637 family.

This Leuconostoc mesenteroides subsp. mesenteroides (strain ATCC 8293 / DSM 20343 / BCRC 11652 / CCM 1803 / JCM 6124 / NCDO 523 / NBRC 100496 / NCIMB 8023 / NCTC 12954 / NRRL B-1118 / 37Y) protein is UPF0637 protein LEUM_0496.